The sequence spans 151 residues: 3-dehydroquinate dehydratase (151 aa).

Tyr26 functions as the Proton acceptor in the catalytic mechanism. Substrate is bound by residues Asn75, His81, and Asp88. Catalysis depends on His101, which acts as the Proton donor. Substrate is bound by residues 102–103 (LS) and Arg112.

The protein belongs to the type-II 3-dehydroquinase family. In terms of assembly, homododecamer.

It catalyses the reaction 3-dehydroquinate = 3-dehydroshikimate + H2O. Its pathway is metabolic intermediate biosynthesis; chorismate biosynthesis; chorismate from D-erythrose 4-phosphate and phosphoenolpyruvate: step 3/7. Its function is as follows. Catalyzes a trans-dehydration via an enolate intermediate. The chain is 3-dehydroquinate dehydratase from Shewanella denitrificans (strain OS217 / ATCC BAA-1090 / DSM 15013).